We begin with the raw amino-acid sequence, 729 residues long: Fatty acid oxidation complex subunit alpha (729 aa).

Residues 1–189 form an enoyl-CoA hydratase/isomerase region; it reads MLYQSETLQL…KIGLVDAVVD (189 aa). D296 is a substrate binding site. Residues 311–729 are 3-hydroxyacyl-CoA dehydrogenase; it reads AAPKLAAVLG…LLDVSTNQPA (419 aa). NAD(+)-binding positions include M324, D343, 400-402, K407, and S429; that span reads VVE. H450 acts as the For 3-hydroxyacyl-CoA dehydrogenase activity in catalysis. NAD(+) is bound at residue N453. Substrate contacts are provided by N500 and Y660.

It in the N-terminal section; belongs to the enoyl-CoA hydratase/isomerase family. In the C-terminal section; belongs to the 3-hydroxyacyl-CoA dehydrogenase family. Heterotetramer of two alpha chains (FadB) and two beta chains (FadA).

It catalyses the reaction a (3S)-3-hydroxyacyl-CoA + NAD(+) = a 3-oxoacyl-CoA + NADH + H(+). The enzyme catalyses a (3S)-3-hydroxyacyl-CoA = a (2E)-enoyl-CoA + H2O. The catalysed reaction is a 4-saturated-(3S)-3-hydroxyacyl-CoA = a (3E)-enoyl-CoA + H2O. It carries out the reaction (3S)-3-hydroxybutanoyl-CoA = (3R)-3-hydroxybutanoyl-CoA. It catalyses the reaction a (3Z)-enoyl-CoA = a 4-saturated (2E)-enoyl-CoA. The enzyme catalyses a (3E)-enoyl-CoA = a 4-saturated (2E)-enoyl-CoA. It participates in lipid metabolism; fatty acid beta-oxidation. In terms of biological role, involved in the aerobic and anaerobic degradation of long-chain fatty acids via beta-oxidation cycle. Catalyzes the formation of 3-oxoacyl-CoA from enoyl-CoA via L-3-hydroxyacyl-CoA. It can also use D-3-hydroxyacyl-CoA and cis-3-enoyl-CoA as substrate. The sequence is that of Fatty acid oxidation complex subunit alpha from Yersinia pseudotuberculosis serotype O:1b (strain IP 31758).